We begin with the raw amino-acid sequence, 78 residues long: Small ribosomal subunit protein bS18B (78 aa).

It belongs to the bacterial ribosomal protein bS18 family. In terms of assembly, part of the 30S ribosomal subunit. Forms a tight heterodimer with protein bS6.

In terms of biological role, binds as a heterodimer with protein bS6 to the central domain of the 16S rRNA, where it helps stabilize the platform of the 30S subunit. In Streptomyces griseus subsp. griseus (strain JCM 4626 / CBS 651.72 / NBRC 13350 / KCC S-0626 / ISP 5235), this protein is Small ribosomal subunit protein bS18B.